The chain runs to 755 residues: Diamine oxidase [copper-containing] (755 aa).

The signal sequence occupies residues 1–24; sequence MGRGTLALGWAGAALLLLQMLAAA. Residue asparagine 115 is glycosylated (N-linked (GlcNAc...) asparagine). Cysteines 182 and 186 form a disulfide. Aspartate 376 serves as the catalytic Proton acceptor. Cysteine 394 and cysteine 420 form a disulfide bridge. Tyrosine 464 (schiff-base intermediate with substrate; via topaquinone) is an active-site residue. A 2',4',5'-topaquinone modification is found at tyrosine 464. Residues histidine 513 and histidine 515 each coordinate Cu(2+). The Ca(2+) site is built by aspartate 522, leucine 523, and aspartate 524. Asparagine 541 is a glycosylation site (N-linked (GlcNAc...) asparagine). 6 residues coordinate Ca(2+): glutamate 565, phenylalanine 656, asparagine 659, glutamate 661, aspartate 667, and leucine 668. Histidine 678 lines the Cu(2+) pocket. N-linked (GlcNAc...) asparagine glycosylation occurs at asparagine 749.

The protein belongs to the copper/topaquinone oxidase family. Homodimer; disulfide-linked. The cofactor is Cu(2+). Requires Ca(2+) as cofactor. It depends on L-topaquinone as a cofactor. Post-translationally, topaquinone (TPQ) is generated by copper-dependent autoxidation of a specific tyrosyl residue. N-glycosylated; the glycans are primarily linear, di-, or tribranched fucosylated complex type.

The protein localises to the secreted. It localises to the extracellular space. Its subcellular location is the cell membrane. It catalyses the reaction histamine + O2 + H2O = imidazole-4-acetaldehyde + H2O2 + NH4(+). The enzyme catalyses N(tau)-methylhistamine + O2 + H2O = 1-methylimidazole-4-acetaldehyde + H2O2 + NH4(+). It carries out the reaction putrescine + O2 + H2O = 4-aminobutanal + H2O2 + NH4(+). The catalysed reaction is cadaverine + O2 + H2O = 5-aminopentanal + H2O2 + NH4(+). Its activity is regulated as follows. Inhibited by amiloride and amiloride analogs. Its function is as follows. Catalyzes the oxidative deamination of primary amines to the corresponding aldehydes with the concomitant production of hydrogen peroxide and ammonia. Its preferred substrates in vitro are the diamines histamine and 1-methylhistamine and it could therefore play a role in allergic and immune responses. Has a broad specificity for diamines and can also act on cadaverine and putrescine, two products of amino acid catabolism. It could also act on polyamines, like spermidine and spermine though less efficiently, and regulate various biological processes. This chain is Diamine oxidase [copper-containing], found in Sus scrofa (Pig).